The following is a 542-amino-acid chain: MTKSNGEEPKMGGRMERFQQGVRKRTLLAKKKVQNITKEDVKSYLFRNAFVLLTVTAVIVGTILGFTLRPYRMSYREVKYFSFPGELLMRMLQMLVLPLIISSLVTGMAALDSKASGKMGMRAVVYYMTTTIIAVVIGIIIVIIIHPGKGTKENMHREGKIVRVTAADAFLDLIRNMFPPNLVEACFKQFKTNYEKRSFKVPIQANETLVGAVINNVSEAMETLTRITEELVPVPGSVNGVNALGLVVFSMCFGFVIGNMKEQGQALREFFDSLNEAIMRLVAVIMWYAPVGILFLIAGKIVEMEDMGVIGGQLAMYTVTVIVGLLIHAVIVLPLLYFLVTRKNPWVFIGGLLQALITALGTSSSSATLPITFKCLEENNGVDKRVTRFVLPVGATINMDGTALYEALAAIFIAQVNNFELNFGQIITISITATAASIGAAGIPQAGLVTMVIVLTSVGLPTDDITLIIAVDWFLDRLRTTTNVLGDSLGAGIVEHLSRHELKNRDVEMGNSVIEENEMKKPYQLIAQDNETEKPIDSETKM.

The Cytoplasmic segment spans residues 1–47; that stretch reads MTKSNGEEPKMGGRMERFQQGVRKRTLLAKKKVQNITKEDVKSYLFR. The helical transmembrane segment at 48–68 threads the bilayer; sequence NAFVLLTVTAVIVGTILGFTL. The Extracellular segment spans residues 69-86; that stretch reads RPYRMSYREVKYFSFPGE. The chain crosses the membrane as a helical span at residues 87-108; that stretch reads LLMRMLQMLVLPLIISSLVTGM. The Cytoplasmic segment spans residues 109–122; that stretch reads AALDSKASGKMGMR. The chain crosses the membrane as a helical span at residues 123–145; that stretch reads AVVYYMTTTIIAVVIGIIIVIII. Topologically, residues 146 to 236 are extracellular; that stretch reads HPGKGTKENM…ITEELVPVPG (91 aa). A helical transmembrane segment spans residues 237–260; sequence SVNGVNALGLVVFSMCFGFVIGNM. At 261–269 the chain is on the cytoplasmic side; that stretch reads KEQGQALRE. Residues 270–297 form a helical membrane-spanning segment; the sequence is FFDSLNEAIMRLVAVIMWYAPVGILFLI. At 298-318 the chain is on the extracellular side; that stretch reads AGKIVEMEDMGVIGGQLAMYT. A helical transmembrane segment spans residues 319–340; it reads VTVIVGLLIHAVIVLPLLYFLV. Residues 341–345 are Cytoplasmic-facing; sequence TRKNP. An intramembrane region (discontinuously helical) is located at residues 346–376; sequence WVFIGGLLQALITALGTSSSSATLPITFKCL. An L-aspartate-binding site is contributed by 363 to 365; that stretch reads SSS. Topologically, residues 377–385 are cytoplasmic; it reads EENNGVDKR. The helical transmembrane segment at 386–412 threads the bilayer; that stretch reads VTRFVLPVGATINMDGTALYEALAAIF. G394, T396, and N398 together coordinate Na(+). An L-aspartate-binding site is contributed by T402. The Extracellular segment spans residues 413-425; the sequence is IAQVNNFELNFGQ. An intramembrane region (discontinuously helical) is located at residues 426–459; sequence IITISITATAASIGAAGIPQAGLVTMVIVLTSVG. 443-447 is an L-aspartate binding site; it reads IPQAG. Residues 460–472 are Extracellular-facing; that stretch reads LPTDDITLIIAVD. A helical membrane pass occupies residues 473 to 494; sequence WFLDRLRTTTNVLGDSLGAGIV. L-aspartate-binding residues include D476 and N483. 2 residues coordinate Na(+): N483 and D487. Residues 495–542 are Cytoplasmic-facing; sequence EHLSRHELKNRDVEMGNSVIEENEMKKPYQLIAQDNETEKPIDSETKM. Position 512 is a phosphoserine (S512).

Belongs to the dicarboxylate/amino acid:cation symporter (DAACS) (TC 2.A.23) family. SLC1A3 subfamily. As to quaternary structure, homotrimer. Post-translationally, glycosylated. As to expression, detected in brain. Detected at very much lower levels in heart, lung, placenta and skeletal muscle. Highly expressed in cerebellum, but also found in frontal cortex, hippocampus and basal ganglia.

The protein localises to the cell membrane. The catalysed reaction is K(+)(in) + L-glutamate(out) + 3 Na(+)(out) + H(+)(out) = K(+)(out) + L-glutamate(in) + 3 Na(+)(in) + H(+)(in). The enzyme catalyses K(+)(in) + L-aspartate(out) + 3 Na(+)(out) + H(+)(out) = K(+)(out) + L-aspartate(in) + 3 Na(+)(in) + H(+)(in). It catalyses the reaction D-aspartate(out) + K(+)(in) + 3 Na(+)(out) + H(+)(out) = D-aspartate(in) + K(+)(out) + 3 Na(+)(in) + H(+)(in). Its function is as follows. Sodium-dependent, high-affinity amino acid transporter that mediates the uptake of L-glutamate and also L-aspartate and D-aspartate. Functions as a symporter that transports one amino acid molecule together with two or three Na(+) ions and one proton, in parallel with the counter-transport of one K(+) ion. Mediates Cl(-) flux that is not coupled to amino acid transport; this avoids the accumulation of negative charges due to aspartate and Na(+) symport. Plays a redundant role in the rapid removal of released glutamate from the synaptic cleft, which is essential for terminating the postsynaptic action of glutamate. This Homo sapiens (Human) protein is Excitatory amino acid transporter 1.